Here is a 347-residue protein sequence, read N- to C-terminus: D-fructose 1,6-bisphosphatase class 2/sedoheptulose 1,7-bisphosphatase (347 aa).

Residues aspartate 33, glutamate 57, aspartate 97, and glutamate 100 each coordinate Mn(2+). Substrate is bound by residues 100–102 (EGT), tyrosine 131, 176–178 (RKR), and 198–200 (DGD). Residue glutamate 225 coordinates Mn(2+).

Belongs to the FBPase class 2 family. In terms of assembly, homotetramer. The cofactor is Mn(2+).

The enzyme catalyses beta-D-fructose 1,6-bisphosphate + H2O = beta-D-fructose 6-phosphate + phosphate. It carries out the reaction D-sedoheptulose 1,7-bisphosphate + H2O = D-sedoheptulose 7-phosphate + phosphate. It functions in the pathway carbohydrate biosynthesis; Calvin cycle. In terms of biological role, catalyzes the hydrolysis of fructose 1,6-bisphosphate (Fru 1,6-P2) and sedoheptulose 1,7-bisphosphate (Sed 1,7-P2) to fructose 6-phosphate and sedoheptulose 7-phosphate, respectively. The sequence is that of D-fructose 1,6-bisphosphatase class 2/sedoheptulose 1,7-bisphosphatase from Synechococcus sp. (strain JA-3-3Ab) (Cyanobacteria bacterium Yellowstone A-Prime).